The sequence spans 267 residues: 3-methyl-2-oxobutanoate hydroxymethyltransferase (267 aa).

2 residues coordinate Mg(2+): D45 and D84. Residues 45-46, D84, and K113 contribute to the 3-methyl-2-oxobutanoate site; that span reads DS. E115 contributes to the Mg(2+) binding site. Residue E182 is the Proton acceptor of the active site.

This sequence belongs to the PanB family. As to quaternary structure, homodecamer; pentamer of dimers. The cofactor is Mg(2+).

It localises to the cytoplasm. It catalyses the reaction 3-methyl-2-oxobutanoate + (6R)-5,10-methylene-5,6,7,8-tetrahydrofolate + H2O = 2-dehydropantoate + (6S)-5,6,7,8-tetrahydrofolate. Its pathway is cofactor biosynthesis; coenzyme A biosynthesis. Its function is as follows. Catalyzes the reversible reaction in which hydroxymethyl group from 5,10-methylenetetrahydrofolate is transferred onto alpha-ketoisovalerate to form ketopantoate. The chain is 3-methyl-2-oxobutanoate hydroxymethyltransferase from Saccharolobus islandicus (strain L.S.2.15 / Lassen #1) (Sulfolobus islandicus).